Reading from the N-terminus, the 128-residue chain is Small ribosomal subunit protein bS6 (128 aa).

This sequence belongs to the bacterial ribosomal protein bS6 family.

In terms of biological role, binds together with bS18 to 16S ribosomal RNA. This Nitratiruptor sp. (strain SB155-2) protein is Small ribosomal subunit protein bS6.